The chain runs to 588 residues: Transcriptional regulatory protein ASH1 (588 aa).

Serine 56 is subject to Phosphoserine. Disordered stretches follow at residues 85–109, 377–398, and 417–495; these read SNTAPASPHHMDYNPISSLTPGNSP, SNNSKSNVRKPSKNKISKQASN, and SSVS…TRHT. The span at 99-109 shows a compositional bias: polar residues; that stretch reads PISSLTPGNSP. The span at 383–392 shows a compositional bias: basic residues; the sequence is NVRKPSKNKI. The segment covering 417-433 has biased composition (low complexity); the sequence is SSVSASSSPSPSTPTKS. A Phosphoserine modification is found at serine 465. Residues 470 to 493 are compositionally biased toward low complexity; that stretch reads PRRSSNSSITKKGSRRSSGSSPTR. A GATA-type; atypical zinc finger spans residues 499–526; it reads CVSCHSSDSPCWRPSWSPRKQDQLCNSC.

As to quaternary structure, component of the RPD3C(L) complex composed of at least ASH1, CTI6, DEP1, PHO23, RPD3, RXT2, RXT3, SAP30, SDS3, SIN3, UME1 and UME6.

The protein localises to the nucleus. Its function is as follows. Component of the RPD3C(L) histone deacetylase complex (HDAC). Responsible for the deacetylation of lysine residues on the N-terminal part of the core histones (H2A, H2B, H3 and H4). Histone deacetylation gives a tag for epigenetic repression and plays an important role in transcriptional regulation, cell cycle progression and developmental events. ASH1 is necessary to repress HO in daughter cells to block mating-type switching through its binding to HO promoter 5'-YTGAT-3' sites. Also involved in pseudohyphal growth. The sequence is that of Transcriptional regulatory protein ASH1 (ASH1) from Saccharomyces cerevisiae (strain ATCC 204508 / S288c) (Baker's yeast).